Consider the following 89-residue polypeptide: Small ribosomal subunit protein uS14A (89 aa).

Belongs to the universal ribosomal protein uS14 family. Part of the 30S ribosomal subunit. Contacts proteins S3 and S10.

Its function is as follows. Binds 16S rRNA, required for the assembly of 30S particles and may also be responsible for determining the conformation of the 16S rRNA at the A site. This is Small ribosomal subunit protein uS14A from Lactiplantibacillus plantarum (strain ATCC BAA-793 / NCIMB 8826 / WCFS1) (Lactobacillus plantarum).